The primary structure comprises 550 residues: Dihydroxy-acid dehydratase (550 aa).

Mg(2+) is bound at residue Asp81. Cys122 is a binding site for [2Fe-2S] cluster. Mg(2+) is bound by residues Asp123 and Lys124. The residue at position 124 (Lys124) is an N6-carboxylysine. Cys194 serves as a coordination point for [2Fe-2S] cluster. Mg(2+) is bound at residue Glu442. The Proton acceptor role is filled by Ser467.

The protein belongs to the IlvD/Edd family. As to quaternary structure, homodimer. Requires [2Fe-2S] cluster as cofactor. The cofactor is Mg(2+).

It catalyses the reaction (2R)-2,3-dihydroxy-3-methylbutanoate = 3-methyl-2-oxobutanoate + H2O. It carries out the reaction (2R,3R)-2,3-dihydroxy-3-methylpentanoate = (S)-3-methyl-2-oxopentanoate + H2O. It functions in the pathway amino-acid biosynthesis; L-isoleucine biosynthesis; L-isoleucine from 2-oxobutanoate: step 3/4. It participates in amino-acid biosynthesis; L-valine biosynthesis; L-valine from pyruvate: step 3/4. Its function is as follows. Functions in the biosynthesis of branched-chain amino acids. Catalyzes the dehydration of (2R,3R)-2,3-dihydroxy-3-methylpentanoate (2,3-dihydroxy-3-methylvalerate) into 2-oxo-3-methylpentanoate (2-oxo-3-methylvalerate) and of (2R)-2,3-dihydroxy-3-methylbutanoate (2,3-dihydroxyisovalerate) into 2-oxo-3-methylbutanoate (2-oxoisovalerate), the penultimate precursor to L-isoleucine and L-valine, respectively. This is Dihydroxy-acid dehydratase from Methanoregula boonei (strain DSM 21154 / JCM 14090 / 6A8).